A 152-amino-acid chain; its full sequence is Small ribosomal subunit protein uS15 (152 aa).

The span at M1 to K11 shows a compositional bias: basic residues. Residues M1–E24 are disordered.

The protein belongs to the universal ribosomal protein uS15 family. Part of the 30S ribosomal subunit.

In Methanosarcina mazei (strain ATCC BAA-159 / DSM 3647 / Goe1 / Go1 / JCM 11833 / OCM 88) (Methanosarcina frisia), this protein is Small ribosomal subunit protein uS15.